A 253-amino-acid chain; its full sequence is Tryptophan synthase alpha chain (253 aa).

Catalysis depends on proton acceptor residues Glu48 and Asp59.

The protein belongs to the TrpA family. In terms of assembly, tetramer of two alpha and two beta chains.

The catalysed reaction is (1S,2R)-1-C-(indol-3-yl)glycerol 3-phosphate + L-serine = D-glyceraldehyde 3-phosphate + L-tryptophan + H2O. Its pathway is amino-acid biosynthesis; L-tryptophan biosynthesis; L-tryptophan from chorismate: step 5/5. In terms of biological role, the alpha subunit is responsible for the aldol cleavage of indoleglycerol phosphate to indole and glyceraldehyde 3-phosphate. The protein is Tryptophan synthase alpha chain of Caldicellulosiruptor saccharolyticus (strain ATCC 43494 / DSM 8903 / Tp8T 6331).